We begin with the raw amino-acid sequence, 264 residues long: Cercarial protease (264 aa).

The N-terminal stretch at 1-19 (MSNRWRFVVVVTLFTYCLT) is a signal peptide. Residues 20–27 (FERVSTWL) constitute a propeptide that is removed on maturation. The 237-residue stretch at 28 to 264 (IRSGEPVQHP…RMLDFVRSNI (237 aa)) folds into the Peptidase S1 domain. The cysteines at positions 53 and 69 are disulfide-linked. Residues H68 and D126 each act as charge relay system in the active site. C192 and C202 are disulfide-bonded. S218 serves as the catalytic Charge relay system.

The protein belongs to the peptidase S1 family. In terms of tissue distribution, acetabular (penetration) glands.

With respect to regulation, activated by an autocatalytic mechanism. Its function is as follows. This protease cleaves elastin and thus facilitates penetration of schistosome parasite larvae through elastin-rich tissue of the host. In Schistosoma mansoni (Blood fluke), this protein is Cercarial protease.